A 189-amino-acid polypeptide reads, in one-letter code: MVTYISFIGESQFNFYFASKKFFRLTKYFRDPINSKKFENLIKQAIIRKLPHIVNYISMIIKNNKPEFNNKLFDNLGINEYFRQCVKHNIYNAIDYFVSKDINTVNEYGKTPLITAIKSGNCIMVKKLIDYGADFNKNKIYKLAFDHRHNDIFIFLIDKKIESDKTYNKIRNNFGSICNTNINELVESK.

The ANK repeat unit spans residues 108–137; that stretch reads YGKTPLITAIKSGNCIMVKKLIDYGADFNK.

This Acanthamoeba polyphaga mimivirus (APMV) protein is Putative ankyrin repeat protein L38.